The following is a 457-amino-acid chain: Multidrug resistance protein MdtK (457 aa).

12 helical membrane passes run 11 to 31 (LLAL…MGFV), 53 to 73 (IWLP…PVIA), 93 to 113 (WLAG…GYII), 127 to 147 (AVGY…FQVA), 160 to 180 (GMVM…IFIY), 189 to 209 (GGVG…LAMV), 243 to 263 (LPIA…ALLV), 276 to 296 (IALN…AAVT), 314 to 334 (AART…IFTV), 350 to 370 (VVTL…SDSI), 387 to 407 (IFYI…YILA), and 418 to 438 (PAGF…MMML).

Belongs to the multi antimicrobial extrusion (MATE) (TC 2.A.66.1) family. MdtK subfamily.

It localises to the cell inner membrane. In terms of biological role, multidrug efflux pump that functions probably as a Na(+)/drug antiporter. This Escherichia coli O139:H28 (strain E24377A / ETEC) protein is Multidrug resistance protein MdtK.